We begin with the raw amino-acid sequence, 101 residues long: Large ribosomal subunit protein uL23 (101 aa).

This sequence belongs to the universal ribosomal protein uL23 family. Part of the 50S ribosomal subunit. Contacts protein L29, and trigger factor when it is bound to the ribosome.

Functionally, one of the early assembly proteins it binds 23S rRNA. One of the proteins that surrounds the polypeptide exit tunnel on the outside of the ribosome. Forms the main docking site for trigger factor binding to the ribosome. This chain is Large ribosomal subunit protein uL23, found in Rhodococcus erythropolis (strain PR4 / NBRC 100887).